A 330-amino-acid chain; its full sequence is Aspartate--ammonia ligase (330 aa).

It belongs to the class-II aminoacyl-tRNA synthetase family. AsnA subfamily.

It localises to the cytoplasm. The catalysed reaction is L-aspartate + NH4(+) + ATP = L-asparagine + AMP + diphosphate + H(+). Its pathway is amino-acid biosynthesis; L-asparagine biosynthesis; L-asparagine from L-aspartate (ammonia route): step 1/1. This Enterobacter sp. (strain 638) protein is Aspartate--ammonia ligase.